A 135-amino-acid chain; its full sequence is Small ribosomal subunit protein uS11 (135 aa).

The protein belongs to the universal ribosomal protein uS11 family. Part of the 30S ribosomal subunit. Interacts with proteins S7 and S18. Binds to IF-3.

Located on the platform of the 30S subunit, it bridges several disparate RNA helices of the 16S rRNA. Forms part of the Shine-Dalgarno cleft in the 70S ribosome. The chain is Small ribosomal subunit protein uS11 from Polynucleobacter asymbioticus (strain DSM 18221 / CIP 109841 / QLW-P1DMWA-1) (Polynucleobacter necessarius subsp. asymbioticus).